A 640-amino-acid polypeptide reads, in one-letter code: MFGFKTTKNKKRVRLLVVAIGVMIFFMCLSNFSSIQSRQSSSTDTPLQQNGKHQVIRVLETQPSININNSENNINNENINNNQNNNPNNNMDNNNKNNNKNNNIDNNNNKNNNNNDNIDNNINNNNNNNNNNNNINNNNNINNNNNIDNTDNNINNNINNNNININNNNKPSYKKPEKKPPLSSSQIFFNSLPPHIQKQVVIREKSNYAQALQYDSYGIVPAKDFFDGLDAVFETKPNYKISTVRKLFNIENLNSNNNNNNNNNNNNNNNNNNNNNYDINNYNNINIKEDDKFENKNYQNGDKNIMYSDYKGIDYGNNNNIEEIERIKEELKIELEKENVNDIFKYRVTIVTQTTVDRLYKVAAMAERWRSPISVSLFIKSQGDIDKLEKAISANKILATFADFHLFYHNNTRYPVNNLRNLAIRNALTEHVLLLDVDFIPPSHLHDHIAHYINLNYLNQDDSLNAFVIPSFSSNLQPKDIPDSKFEFIEMLTKNKIEPSNLKVCPKCHSPTDYTRWMTSTEPYAIEYHWIYEPFLVYNRSQTLPFDERFKGYGFDKNSQIFGMAAQGFTFSVLPEAYIVHINHPTSRWDGPSLDDQQWDSLRVVCDLLPEIRKRYAKGYKVDRLFDEPTTENCYSNDHW.

At 1–14 (MFGFKTTKNKKRVR) the chain is on the cytoplasmic side. The chain crosses the membrane as a helical; Signal-anchor for type II membrane protein span at residues 15–35 (LLVVAIGVMIFFMCLSNFSSI). At 36–640 (QSRQSSSTDT…TENCYSNDHW (605 aa)) the chain is on the extracellular side. 2 disordered regions span residues 63-184 (PSIN…PLSS) and 254-277 (NSNNNNNNNNNNNNNNNNNNNNNY). Over residues 65-171 (ININNSENNI…NININNNNKP (107 aa)) the composition is skewed to low complexity. N68 is a glycosylation site (N-linked (GlcNAc...) asparagine). 2 N-linked (GlcNAc...) asparagine glycosylation sites follow: N410 and N539.

The protein belongs to the glycosyltransferase 8 family. Highly divergent.

The protein localises to the membrane. This chain is Glycosyltransferase-like protein gnt14 (gnt14), found in Dictyostelium discoideum (Social amoeba).